A 134-amino-acid polypeptide reads, in one-letter code: UPF0102 protein Rmet_3430 (134 aa).

Belongs to the UPF0102 family.

In Cupriavidus metallidurans (strain ATCC 43123 / DSM 2839 / NBRC 102507 / CH34) (Ralstonia metallidurans), this protein is UPF0102 protein Rmet_3430.